We begin with the raw amino-acid sequence, 138 residues long: Large ribosomal subunit protein uL16 (138 aa).

Basic residues predominate over residues 1-17 (MLIPRKVKHRKQHHPRQ). The segment at 1 to 24 (MLIPRKVKHRKQHHPRQRGIASGG) is disordered.

It belongs to the universal ribosomal protein uL16 family. Part of the 50S ribosomal subunit.

Its function is as follows. Binds 23S rRNA and is also seen to make contacts with the A and possibly P site tRNAs. The polypeptide is Large ribosomal subunit protein uL16 (Mycolicibacterium gilvum (strain PYR-GCK) (Mycobacterium gilvum (strain PYR-GCK))).